We begin with the raw amino-acid sequence, 469 residues long: Neuraminidase (469 aa).

Over Met-1–Lys-6 the chain is Intravirion. A helical transmembrane segment spans residues Thr-7–Leu-29. An involved in apical transport and lipid raft association region spans residues Gly-11–Val-33. Residues Ala-30 to Ile-469 lie on the Virion surface side of the membrane. The interval His-36–Ser-88 is hypervariable stalk region. 4 N-linked (GlcNAc...) asparagine; by host glycosylation sites follow: Asn-61, Asn-69, Asn-70, and Asn-86. The head of neuraminidase stretch occupies residues Gln-91–Ile-469. Disulfide bonds link Cys-92–Cys-417, Cys-124–Cys-129, Cys-183–Cys-230, Cys-232–Cys-237, Cys-278–Cys-291, Cys-280–Cys-289, Cys-318–Cys-337, and Cys-421–Cys-447. Arg-118 lines the substrate pocket. Asn-146 carries N-linked (GlcNAc...) asparagine; by host glycosylation. The active-site Proton donor/acceptor is the Asp-151. Arg-152 lines the substrate pocket. Asn-200 and Asn-234 each carry an N-linked (GlcNAc...) asparagine; by host glycan. Glu-276–Glu-277 contributes to the substrate binding site. Arg-292 is a binding site for substrate. Ca(2+) contacts are provided by Asp-293, Gly-297, and Asp-324. Residues Thr-325–Val-349 are disordered. Substrate is bound at residue Arg-371. Asn-402 is a glycosylation site (N-linked (GlcNAc...) asparagine; by host). Tyr-406 serves as the catalytic Nucleophile.

This sequence belongs to the glycosyl hydrolase 34 family. As to quaternary structure, homotetramer. Ca(2+) serves as cofactor. In terms of processing, N-glycosylated.

The protein localises to the virion membrane. It is found in the host apical cell membrane. It carries out the reaction Hydrolysis of alpha-(2-&gt;3)-, alpha-(2-&gt;6)-, alpha-(2-&gt;8)- glycosidic linkages of terminal sialic acid residues in oligosaccharides, glycoproteins, glycolipids, colominic acid and synthetic substrates.. With respect to regulation, inhibited by the neuraminidase inhibitors zanamivir (Relenza) and oseltamivir (Tamiflu). These drugs interfere with the release of progeny virus from infected cells and are effective against all influenza strains. Resistance to neuraminidase inhibitors is quite rare. Catalyzes the removal of terminal sialic acid residues from viral and cellular glycoconjugates. Cleaves off the terminal sialic acids on the glycosylated HA during virus budding to facilitate virus release. Additionally helps virus spread through the circulation by further removing sialic acids from the cell surface. These cleavages prevent self-aggregation and ensure the efficient spread of the progeny virus from cell to cell. Otherwise, infection would be limited to one round of replication. Described as a receptor-destroying enzyme because it cleaves a terminal sialic acid from the cellular receptors. May facilitate viral invasion of the upper airways by cleaving the sialic acid moieties on the mucin of the airway epithelial cells. Likely to plays a role in the budding process through its association with lipid rafts during intracellular transport. May additionally display a raft-association independent effect on budding. Plays a role in the determination of host range restriction on replication and virulence. Sialidase activity in late endosome/lysosome traffic seems to enhance virus replication. The polypeptide is Neuraminidase (Influenza A virus (strain A/RI/5-/1957 H2N2)).